Reading from the N-terminus, the 156-residue chain is Arginine repressor (156 aa).

Belongs to the ArgR family.

It is found in the cytoplasm. It participates in amino-acid biosynthesis; L-arginine biosynthesis [regulation]. Its function is as follows. Regulates arginine biosynthesis genes. This is Arginine repressor from Tolumonas auensis (strain DSM 9187 / NBRC 110442 / TA 4).